We begin with the raw amino-acid sequence, 513 residues long: GMP synthase [glutamine-hydrolyzing] (513 aa).

In terms of domain architecture, Glutamine amidotransferase type-1 spans L7 to D198. C84 (nucleophile) is an active-site residue. Catalysis depends on residues H172 and E174. A GMPS ATP-PPase domain is found at W199–R388. An ATP-binding site is contributed by S226–S232.

As to quaternary structure, homodimer.

The catalysed reaction is XMP + L-glutamine + ATP + H2O = GMP + L-glutamate + AMP + diphosphate + 2 H(+). It participates in purine metabolism; GMP biosynthesis; GMP from XMP (L-Gln route): step 1/1. Its function is as follows. Catalyzes the synthesis of GMP from XMP. The chain is GMP synthase [glutamine-hydrolyzing] from Symbiobacterium thermophilum (strain DSM 24528 / JCM 14929 / IAM 14863 / T).